Consider the following 1196-residue polypeptide: Phosphoglucan, water dikinase, chloroplastic (1196 aa).

Residues 1–54 (MESIGSHCCSSPFTFITRNSSSSLPRLVNITHRVNLSHQSHRLRNSNSRLTCTA) constitute a chloroplast transit peptide. At T55 the chain carries N-acetylthreonine. The region spanning 66–166 (KKDGSGTKVR…NFSVVCHWDA (101 aa)) is the CBM20 domain. Residues 174-200 (PQEVGNDDDVGDGGHERDNHDVGDDRV) form a disordered region. The span at 185 to 200 (DGGHERDNHDVGDDRV) shows a compositional bias: basic and acidic residues. H759 serves as the catalytic Tele-phosphohistidine intermediate. The segment at 804–855 (LSTEGRSRTSKSSATKKTDKNSLSKKKTDKKSLSIDDEESKPGSSSSNSLLY) is disordered.

Belongs to the PEP-utilizing enzyme family. In terms of assembly, homodimer. The cofactor is Mg(2+). As to expression, in all starch containing tissues (e.g. roots, leaves, stems, inflorescence and siliques).

The protein resides in the plastid. Its subcellular location is the chloroplast. The catalysed reaction is [(1-&gt;4)-6-phospho-alpha-D-glucosyl](n) + n ATP + n H2O = [(1-&gt;4)-3,6-bisphospho-alpha-D-glucosyl](n) + n AMP + n phosphate + 2n H(+). Mediates the incorporation of phosphate into starch-like phospho-alpha-glucan, mostly at the C-3 position of glucose units. Required for starch degradation, suggesting that the phosphate content of starch regulates its degradability. This is Phosphoglucan, water dikinase, chloroplastic (GWD3) from Arabidopsis thaliana (Mouse-ear cress).